The primary structure comprises 84 residues: Inactive transposase YbfQ (84 aa).

The polypeptide is Inactive transposase YbfQ (ybfQ) (Escherichia coli (strain K12)).